Reading from the N-terminus, the 226-residue chain is MNENLFASFITPMMFGLPLVTLIVLFPSLLFPTSNRLVNNRLISLQQWMLQLVSKQMMSIHNTKGQTWALMLMSLILFIGSTNLLGLLPHSFTPTTQLSMNLGMAIPLWGGAVITGFRNKTKASLAHFLPQGTPTPLIPMLVIIETISLFIQPVALAVRLTANITAGHLLIHLIGGATLALMSINTTTALITFIILILLTVLEFAVAMIQAYVFTLLVSLYLHDNT.

Transmembrane regions (helical) follow at residues 6 to 26 (FASFITPMMFGLPLVTLIVLF), 68 to 88 (WALMLMSLILFIGSTNLLGLL), 97 to 117 (QLSMNLGMAIPLWGGAVITGF), 138 to 158 (IPMLVIIETISLFIQPVALAV), 164 to 184 (ITAGHLLIHLIGGATLALMSI), and 189 to 209 (ALITFIILILLTVLEFAVAMI).

Belongs to the ATPase A chain family. As to quaternary structure, component of the ATP synthase complex composed at least of ATP5F1A/subunit alpha, ATP5F1B/subunit beta, ATP5MC1/subunit c (homooctomer), MT-ATP6/subunit a, MT-ATP8/subunit 8, ATP5ME/subunit e, ATP5MF/subunit f, ATP5MG/subunit g, ATP5MK/subunit k, ATP5MJ/subunit j, ATP5F1C/subunit gamma, ATP5F1D/subunit delta, ATP5F1E/subunit epsilon, ATP5PF/subunit F6, ATP5PB/subunit b, ATP5PD/subunit d, ATP5PO/subunit OSCP. ATP synthase complex consists of a soluble F(1) head domain (subunits alpha(3) and beta(3)) - the catalytic core - and a membrane F(0) domain - the membrane proton channel (subunits c, a, 8, e, f, g, k and j). These two domains are linked by a central stalk (subunits gamma, delta, and epsilon) rotating inside the F1 region and a stationary peripheral stalk (subunits F6, b, d, and OSCP). Interacts with DNAJC30; interaction is direct.

It localises to the mitochondrion inner membrane. The enzyme catalyses H(+)(in) = H(+)(out). In terms of biological role, subunit a, of the mitochondrial membrane ATP synthase complex (F(1)F(0) ATP synthase or Complex V) that produces ATP from ADP in the presence of a proton gradient across the membrane which is generated by electron transport complexes of the respiratory chain. ATP synthase complex consist of a soluble F(1) head domain - the catalytic core - and a membrane F(1) domain - the membrane proton channel. These two domains are linked by a central stalk rotating inside the F(1) region and a stationary peripheral stalk. During catalysis, ATP synthesis in the catalytic domain of F(1) is coupled via a rotary mechanism of the central stalk subunits to proton translocation. With the subunit c (ATP5MC1), forms the proton-conducting channel in the F(0) domain, that contains two crucial half-channels (inlet and outlet) that facilitate proton movement from the mitochondrial intermembrane space (IMS) into the matrix. Protons are taken up via the inlet half-channel and released through the outlet half-channel, following a Grotthuss mechanism. The chain is ATP synthase F(0) complex subunit a from Ovis aries (Sheep).